A 305-amino-acid chain; its full sequence is rRNA 2'-O-methyltransferase fibrillarin (305 aa).

Residues 1–70 (MAYTPGSRGG…SGGRGGAKGG (70 aa)) are disordered. A compositionally biased stretch (gly residues) spans 7–69 (SRGGRGGSRG…SSGGRGGAKG (63 aa)). Residues serine 111 and serine 114 each carry the phosphoserine modification. Residues 160-161 (TS), 179-180 (EF), 204-205 (DA), and 224-227 (DVAQ) contribute to the S-adenosyl-L-methionine site.

Belongs to the methyltransferase superfamily. Fibrillarin family. As to quaternary structure, component of box C/D small nucleolar ribonucleoprotein (snoRNP) particles. Post-translationally, by homology to other fibrillarins, some or all of the N-terminal domain arginines are modified to asymmetric dimethylarginine (DMA).

The protein localises to the nucleus. It localises to the nucleolus. The catalysed reaction is L-glutaminyl-[histone H2A] + S-adenosyl-L-methionine = N(5)-methyl-L-glutaminyl-[histone H2A] + S-adenosyl-L-homocysteine + H(+). Its function is as follows. S-adenosyl-L-methionine-dependent methyltransferase that has the ability to methylate both RNAs and proteins. Involved in pre-rRNA processing by catalyzing the site-specific 2'-hydroxyl methylation of ribose moieties in pre-ribosomal RNA. Site specificity is provided by a guide RNA that base pairs with the substrate. Methylation occurs at a characteristic distance from the sequence involved in base pairing with the guide RNA. Also acts as a protein methyltransferase by mediating methylation of 'Gln-105' of histone H2A (H2AQ105me), a modification that impairs binding of the FACT complex and is specifically present at 35S ribosomal DNA locus. The chain is rRNA 2'-O-methyltransferase fibrillarin (fib1) from Schizosaccharomyces pombe (strain 972 / ATCC 24843) (Fission yeast).